Reading from the N-terminus, the 30-residue chain is Sillucin (30 aa).

Cystine bridges form between Cys-2/Cys-7, Cys-12/Cys-24, Cys-13/Cys-30, and Cys-14/Cys-21.

It localises to the secreted. Functionally, sillucin is an antimicrobial agent produced by the thermophilic fungus Rhizomucor pusillus in liquid culture; it is effective against Gram-positive bacteria at the level of RNA metabolism. The protein is Sillucin of Rhizomucor pusillus.